Consider the following 474-residue polypeptide: Tubulin gamma-2 chain (474 aa).

142 to 148 (AGGTGSG) is a GTP binding site.

This sequence belongs to the tubulin family. Gamma-tubulin complex is composed of gamma-tubulin and GCP proteins.

The protein localises to the cytoplasm. It is found in the cytoskeleton. Its subcellular location is the microtubule organizing center. It localises to the nucleus. The protein resides in the cell cortex. Tubulin is the major constituent of microtubules. The gamma chain is found at microtubule organizing centers (MTOC) such as the spindle poles, suggesting that it is involved in the minus-end nucleation of microtubule assembly. In terms of biological role, gamma-tubulin complex is essential for the control of microtubular network remodeling in the course of initiation and development of giant-feeding cells, and for the successful reproduction of nematodes (e.g. Meloidogyne spp.) in their plant hosts. The protein is Tubulin gamma-2 chain (TUBG2) of Arabidopsis thaliana (Mouse-ear cress).